The following is a 121-amino-acid chain: Large ribosomal subunit protein bL19 (121 aa).

This sequence belongs to the bacterial ribosomal protein bL19 family.

Functionally, this protein is located at the 30S-50S ribosomal subunit interface and may play a role in the structure and function of the aminoacyl-tRNA binding site. This Chlamydia caviae (strain ATCC VR-813 / DSM 19441 / 03DC25 / GPIC) (Chlamydophila caviae) protein is Large ribosomal subunit protein bL19.